Consider the following 144-residue polypeptide: Large ribosomal subunit protein uL11 (144 aa).

Belongs to the universal ribosomal protein uL11 family. In terms of assembly, part of the ribosomal stalk of the 50S ribosomal subunit. Interacts with L10 and the large rRNA to form the base of the stalk. L10 forms an elongated spine to which L12 dimers bind in a sequential fashion forming a multimeric L10(L12)X complex. Post-translationally, one or more lysine residues are methylated.

Functionally, forms part of the ribosomal stalk which helps the ribosome interact with GTP-bound translation factors. The polypeptide is Large ribosomal subunit protein uL11 (Streptomyces coelicolor (strain ATCC BAA-471 / A3(2) / M145)).